The sequence spans 43 residues: Bacteriocin weissellin-A (43 aa).

Cys9 and Cys14 are oxidised to a cystine.

The protein localises to the secreted. Highly active against Gram-positive bacteria M.flavus strain ATCC 400, M.luteus strain CECT241, C.soprogenes strain NCTC533, L.monocytogenes strain ATCC 19111, L.inocua strain ATCC BAA-680D and S.carnosus strain LMG13564. Less active against B.cereus strain LMG13569, C.thiaminolyticum strain ATCC 15579, E.faecalis strain NCTC8176, L.lactis strain LM0230, L.casei strain ATCC 344, L.lactis strain IL1403, L.jensenii strain ATCC 25258, L.plantarum strain CECT220, L.brevis strain ATCC 8287, L.bulgaricus strain LMG13551, P.acidilactici strain ATCC 25740, P.pentosaceus strain ATCC 33316 and P.pentosaceus strain LMG13560. Weakly active against L.mesenteroides strain ATCC 19254, L.lactis strain ATCC 1454, L.sakei strain CECT906T, L.lactis subsp. cremoris strain MC1363 and L.curvatus strain ATCC 51436. Not active against Gram-negative bacterium S.enteritidis strain ATCC 13076. The mode of action appears to be non-lytic. Inactivated by proteinase K, but insensitive to trypsin, alpha-chymotrypsin, pepsin and papain. The chain is Bacteriocin weissellin-A from Weissella paramesenteroides (Leuconostoc paramesenteroides).